The chain runs to 147 residues: Flagellar assembly factor FliW (147 aa).

This sequence belongs to the FliW family. Interacts with translational regulator CsrA and flagellin(s).

It localises to the cytoplasm. In terms of biological role, acts as an anti-CsrA protein, binds CsrA and prevents it from repressing translation of its target genes, one of which is flagellin. Binds to flagellin and participates in the assembly of the flagellum. The chain is Flagellar assembly factor FliW from Chromobacterium violaceum (strain ATCC 12472 / DSM 30191 / JCM 1249 / CCUG 213 / NBRC 12614 / NCIMB 9131 / NCTC 9757 / MK).